The chain runs to 153 residues: MAPKAEKKPAAKKPAEEEPAAEKAEKAPAGKKPKAEKRLPAGKAEKSSGEGKKAGRKKAKKSVETYKIYIFKVLKQVHPDIGISSKAMSIMNSFINDIFEKLAGESAKLARYNKKPTITSREIQTSVRLVLPGELAKHAVSEGTKAVTKFTSA.

Composition is skewed to basic and acidic residues over residues 1–28 (MAPKAEKKPAAKKPAEEEPAAEKAEKAP) and 36–53 (EKRLPAGKAEKSSGEGKK). The disordered stretch occupies residues 1 to 61 (MAPKAEKKPA…KKAGRKKAKK (61 aa)). Residues Lys7 and Lys37 each carry the N6-acetyllysine modification. Lys149 is covalently cross-linked (Glycyl lysine isopeptide (Lys-Gly) (interchain with G-Cter in ubiquitin)).

Belongs to the histone H2B family. The nucleosome is a histone octamer containing two molecules each of H2A, H2B, H3 and H4 assembled in one H3-H4 heterotetramer and two H2A-H2B heterodimers. The octamer wraps approximately 147 bp of DNA. Post-translationally, can be acetylated to form H2BK6ac and H2BK33ac. In terms of processing, monoubiquitinated by BRE1 to form H2BK143ub1 and deubiquitinated by UBP26. Required for heterochromatic histone H3 di- and trimethylation at H3K4me. May give a specific tag for epigenetic transcriptional activation.

The protein resides in the nucleus. It is found in the chromosome. Core component of nucleosome. Nucleosomes wrap and compact DNA into chromatin, limiting DNA accessibility to the cellular machineries which require DNA as a template. Histones thereby play a central role in transcription regulation, DNA repair, DNA replication and chromosomal stability. DNA accessibility is regulated via a complex set of post-translational modifications of histones, also called histone code, and nucleosome remodeling. This chain is Histone H2B.10 (H2B.10), found in Oryza sativa subsp. indica (Rice).